A 361-amino-acid polypeptide reads, in one-letter code: AT-hook motif nuclear-localized protein 12 (361 aa).

2 disordered regions span residues 29–143 (SQVA…GRKQ) and 286–361 (NNKT…LTRG). Residues 48–59 (SNPNIHHPQANN) are compositionally biased toward polar residues. Residues 85–95 (QPPPPPPPPEE) show a composition bias toward pro residues. The Bipartite nuclear localization signal signature appears at 99–107 (KRKRGRPRK). 2 DNA-binding regions (a.T hook) span residues 99-111 (KRKR…YGEP) and 130-142 (KRAR…TGRK). One can recognise a PPC domain in the interval 154-297 (TSAGLAFAPH…KTIRQEKEPN (144 aa)). A compositionally biased stretch (low complexity) spans 306–322 (ETTPGSAAEPAASAGQQ).

Homodimer. Interacts with AHL27, AHL29 and ATAF2/NAC081.

The protein resides in the nucleus. Its function is as follows. Transcription factor that specifically binds AT-rich DNA sequences related to the nuclear matrix attachment regions (MARs). The sequence is that of AT-hook motif nuclear-localized protein 12 from Arabidopsis thaliana (Mouse-ear cress).